A 662-amino-acid polypeptide reads, in one-letter code: Interleukin-12 receptor subunit beta-1 (662 aa).

Positions 1-23 (MEPLVTWVVPLLFLFLLSRQGAA) are cleaved as a signal peptide. Topologically, residues 24 to 545 (CRTSECCFQD…RFSIEVQVSD (522 aa)) are extracellular. Fibronectin type-III domains lie at 46-136 (GPRD…LYNS), 142-234 (PLGD…VPPE), 237-337 (PQPQ…IPAD), 338-444 (THTE…GNAS), and 448-542 (TPHH…IEVQ). A disulfide bond links C52 and C62. N-linked (GlcNAc...) asparagine glycosylation is present at N121. A WSXWS motif motif is present at residues 222–226 (WSKWS). N329, N346, N352, N442, and N456 each carry an N-linked (GlcNAc...) asparagine glycan. The helical transmembrane segment at 546–570 (WLIFFASLGSFLSILLVGVLGYLGL) threads the bilayer. The Cytoplasmic segment spans residues 571 to 662 (NRAARHLCPP…EDGDRCKAKM (92 aa)). The Box 1 motif motif lies at 577–585 (LCPPLPTPC). A compositionally biased stretch (basic and acidic residues) spans 626–637 (GERTEPLEKTEL). The disordered stretch occupies residues 626–648 (GERTEPLEKTELPEGAPELALDT).

Belongs to the type I cytokine receptor family. Type 2 subfamily. Dimer or oligomer; disulfide-linked. Interacts with IL12RB2 to form the high affinity IL12 receptor. Heterodimer with IL23R; in presence of IL23. The heterodimer forms the IL23 receptor.

It is found in the membrane. In terms of biological role, functions as an interleukin receptor which binds interleukin-12 with low affinity and is involved in IL12 transduction. Associated with IL12RB2 it forms a functional, high affinity receptor for IL12. Also associates with IL23R to form the interleukin-23 receptor which functions in IL23 signal transduction probably through activation of the Jak-Stat signaling cascade. The sequence is that of Interleukin-12 receptor subunit beta-1 (IL12RB1) from Homo sapiens (Human).